The chain runs to 1675 residues: Clathrin heavy chain 1 (1675 aa).

At alanine 2 the chain carries N-acetylalanine. A globular terminal domain region spans residues 2–479; sequence AQILPIRFQE…VDPTLALSVY (478 aa). WD40-like repeat regions lie at residues 24–67, 68–107, 108–149, 150–195, 196–257, 258–301, and 302–330; these read NIGF…RPIS, ADSA…MTDD, VTFW…SSLA, GCQI…QPIE, GHAA…PEAQ, NDFP…ISGE, and TIFV…VCVE. At serine 67 the chain carries Phosphoserine. At threonine 105 the chain carries Phosphothreonine. The residue at position 184 (tyrosine 184) is a Phosphotyrosine. A Phosphothreonine modification is found at threonine 394. Positions 449 to 465 are binding site for the uncoating ATPase, involved in lattice disassembly; that stretch reads EKWLKEDKLECSEELGD. Residues 480-523 form a flexible linker region; it reads LRANVPNKVIQCFAETGQVQKIVLYAKKVGYTPDWIFLLRNVMR. The tract at residues 524–634 is distal segment; that stretch reads ISPDQGQQFA…RALEHFTDLY (111 aa). The interval 524-1675 is heavy chain arm; the sequence is ISPDQGQQFA…QPQPGFGYSM (1152 aa). CHCR repeat units lie at residues 537–683, 686–828, 833–972, 979–1124, 1128–1269, 1274–1420, and 1423–1566; these read VQDE…QICV, ASKY…SEDV, ILVV…PLID, LSET…VKEA, YIKA…FRLA, LHIV…LLLN, and LMVL…RECF. Tyrosine 634 is subject to Phosphotyrosine. Residues 639–1675 form a proximal segment region; sequence AVVHTHLLNP…QPQPGFGYSM (1037 aa). Position 737 is an N6-succinyllysine (lysine 737). Residue lysine 856 is modified to N6-acetyllysine. Residue tyrosine 899 is modified to Phosphotyrosine. Serine 1167 bears the Phosphoserine mark. Tyrosine 1206 bears the Phosphotyrosine mark. Residues 1213–1522 are involved in binding clathrin light chain; the sequence is AAKLLYNNVS…YLFKGNNRWK (310 aa). At serine 1229 the chain carries Phosphoserine. Lysine 1441 bears the N6-acetyllysine; alternate mark. At lysine 1441 the chain carries N6-succinyllysine; alternate. Tyrosine 1477 and tyrosine 1487 each carry phosphotyrosine. Serine 1494 carries the phosphoserine modification. Lysine 1501 is modified (N6-acetyllysine). Residues 1550–1675 form a trimerization region; sequence AEELLQWFLQ…QPQPGFGYSM (126 aa).

The protein belongs to the clathrin heavy chain family. In terms of assembly, clathrin triskelions, composed of 3 heavy chains and 3 light chains, are the basic subunits of the clathrin coat. In the presence of light chains, hub assembly is influenced by both the pH and the concentration of calcium. Interacts with HIP1. Interacts with DENND1A, DENND1B and DENND1C. Interacts with OCRL. Interacts with ERBB2. Interacts with FKBP6. Interacts with CKAP5 and TACC3 forming the TACC3/ch-TOG/clathrin complex located at spindle inter-microtubules bridges; the complex implicates clathrin triskelions; TACC3 and CLTC are proposed to form a composite microtubule interaction surface. Interacts with ATG16L1 (via N-terminus). Interacts with RFTN1; the interaction occurs in response to pathogens. Interacts with TMEM106B (via N-terminus). Interacts with DNAJC6; this interaction produces a local change in heavy-chain contacts, creating a detectable global distortion of the clathrin coat and leads to the recruitment of HSPA8.

It localises to the cytoplasmic vesicle membrane. The protein localises to the membrane. The protein resides in the coated pit. Its subcellular location is the melanosome. It is found in the cytoplasm. It localises to the cytoskeleton. The protein localises to the spindle. In terms of biological role, clathrin is the major protein of the polyhedral coat of coated pits and vesicles. Two different adapter protein complexes link the clathrin lattice either to the plasma membrane or to the trans-Golgi network. Acts as a component of the TACC3/ch-TOG/clathrin complex proposed to contribute to stabilization of kinetochore fibers of the mitotic spindle by acting as inter-microtubule bridge. The TACC3/ch-TOG/clathrin complex is required for the maintenance of kinetochore fiber tension. Plays a role in early autophagosome formation. Interaction with DNAJC6 mediates the recruitment of HSPA8 to the clathrin lattice and creates local destabilization of the lattice promoting uncoating. This chain is Clathrin heavy chain 1, found in Bos taurus (Bovine).